The chain runs to 2442 residues: Centrosome-associated protein CEP250 (2442 aa).

Coiled-coil stretches lie at residues 95–158 (NLDE…KESQ), 244–352 (AQLL…TQVM), 395–1172 (LTRR…EQQP), and 1243–2227 (SALH…KERL). Basic and acidic residues-rich tracts occupy residues 1273 to 1289 (LTDTEAEKSQVHTELQD) and 1699 to 1715 (LTTQRQLMQERAEEGKG). Disordered stretches follow at residues 1273 to 1308 (LTDTEAEKSQVHTELQDLQRQLSQNQEEKSKWEGKQ), 1699 to 1725 (LTTQRQLMQERAEEGKGPSKAQRGSLE), and 1820 to 1839 (EALQQEQQQAQGQEERVKEK). The segment covering 1820–1831 (EALQQEQQQAQG) has biased composition (low complexity). Phosphoserine is present on Ser-2138. Position 2218 is a phosphothreonine (Thr-2218). The disordered stretch occupies residues 2223-2244 (EKERLHSPGATSTAELGSRGEQ). Phosphoserine occurs at positions 2229, 2252, and 2322. Residues 2262–2376 (GMEKQSWRQR…RKQKQDYITR (115 aa)) adopt a coiled-coil conformation. Disordered regions lie at residues 2307 to 2345 (RRKLKREAMRAAQAGSLEISKATASSPTQQDGRGQKNSD) and 2416 to 2442 (ESLTQSLTSPGPVLLHPSPSTTQAASR). Over residues 2328–2338 (ATASSPTQQDG) the composition is skewed to polar residues. Ser-2417 and Ser-2421 each carry phosphoserine; by NEK2. The span at 2433-2442 (SPSTTQAASR) shows a compositional bias: polar residues.

Monomer and homodimer. Forms a complex in vitro with both NEK2 kinase and the PPP1CC catalytic subunit of protein phosphatase 1 (PP1). Interacts with CEP135. Interacts with CROCC/rootletin. Interacts with CNTLN. Interacts with NIN (via C-terminus). Interacts with CCDC102B (via N-terminus); the interaction results in recruitment of CCDC102B to the proximal ends of centrioles. Post-translationally, differentially phosphorylated during cell cycle. Phosphorylation may regulate association/dissociation from centrosome. During M phase of mitosis, C-terminal part is phosphorylated by NEK2, suggesting that it may trigger the dissociation from the mitotic centrosome. Dephosphorylated in vitro by the PP1 phosphatase. In terms of tissue distribution, ubiquitously and weakly expressed.

Its subcellular location is the cytoplasm. The protein localises to the perinuclear region. It is found in the cytoskeleton. The protein resides in the microtubule organizing center. It localises to the centrosome. Its subcellular location is the centriole. The protein localises to the cilium basal body. It is found in the cell projection. The protein resides in the cilium. It localises to the photoreceptor outer segment. Its subcellular location is the photoreceptor inner segment. Plays an important role in centrosome cohesion during interphase. Recruits CCDC102B to the proximal ends of centrioles. Maintains centrosome cohesion by forming intercentriolar linkages. Accumulates at the proximal end of each centriole, forming supramolecular assemblies with viscous material properties that promote organelle cohesion. May be involved in ciliogenesis. In Homo sapiens (Human), this protein is Centrosome-associated protein CEP250 (CEP250).